A 315-amino-acid polypeptide reads, in one-letter code: Probable cell division protein WhiA (315 aa).

A DNA-binding region (H-T-H motif) is located at residues 280–313 (SLRELGKMLNPPVGKSGVNHRLRRIEKIADELKQ).

The protein belongs to the WhiA family.

Its function is as follows. Involved in cell division and chromosome segregation. The protein is Probable cell division protein WhiA of Clostridium botulinum (strain ATCC 19397 / Type A).